Consider the following 1019-residue polypeptide: DNA topoisomerase 1 (1019 aa).

The tract at residues 1–160 is disordered; sequence MNSIQVKNEP…KTMSITGSGE (160 aa). Positions 46–56 are enriched in basic and acidic residues; it reads KPLAKRPKVED. The span at 62–78 shows a compositional bias: polar residues; that stretch reads PLTSTVSSQNGVQKRSG. Acidic residues-rich tracts occupy residues 83-93 and 107-136; these read DDNDDDSDSDS and SDDD…DDDD. Interaction with DNA regions lie at residues 379–380, 442–447, and 556–558; these read KY, RAGNEK, and SAK. One can recognise a Topo IB-type catalytic domain in the interval 386–860; the sequence is TSNFKTNSDR…KKVKKEEEEN (475 aa). The segment at 716 to 737 is disordered; sequence EQKGLTGDDGTPKKGKKAKNVE. Tyrosine 822 functions as the O-(3'-phospho-DNA)-tyrosine intermediate in the catalytic mechanism. Disordered regions lie at residues 843–890 and 940–1019; these read GQGK…TGDS and MRKL…AAVV. Residues 854–863 show a composition bias toward basic and acidic residues; it reads KKEEEENDIK. Positions 864 to 879 are enriched in basic residues; sequence PKKKDAKGAASKKRAA. Basic and acidic residues-rich tracts occupy residues 940 to 950 and 980 to 996; these read MRKLDSAERKG and TSAD…VDKT. Over residues 997 to 1012 the composition is skewed to acidic residues; that stretch reads EESDDDLSSDSSDDED.

This sequence belongs to the type IB topoisomerase family. Monomer.

The enzyme catalyses ATP-independent breakage of single-stranded DNA, followed by passage and rejoining.. Its function is as follows. Releases the supercoiling and torsional tension of DNA introduced during the DNA replication and transcription by transiently cleaving and rejoining one strand of the DNA duplex. Introduces a single-strand break via transesterification at a target site in duplex DNA. The scissile phosphodiester is attacked by the catalytic tyrosine of the enzyme, resulting in the formation of a DNA-(3'-phosphotyrosyl)-enzyme intermediate and the expulsion of a 5'-OH DNA strand. The free DNA strand then rotates around the intact phosphodiester bond on the opposing strand, thus removing DNA supercoils. Finally, in the religation step, the DNA 5'-OH attacks the covalent intermediate to expel the active-site tyrosine and restore the DNA phosphodiester backbone. The polypeptide is DNA topoisomerase 1 (TOP1) (Mycosarcoma maydis (Corn smut fungus)).